A 334-amino-acid chain; its full sequence is Holliday junction branch migration complex subunit RuvB (334 aa).

A large ATPase domain (RuvB-L) region spans residues 4–184 (ADRLIQPQLQ…FGIPLRLEFY (181 aa)). ATP is bound by residues Arg24, Gly65, Lys68, Thr69, Thr70, 131 to 133 (EDY), Arg174, Tyr184, and Arg221. Thr69 contributes to the Mg(2+) binding site. The tract at residues 185-255 (NIKDLSTIVT…VADHALDLLD (71 aa)) is small ATPAse domain (RuvB-S). A head domain (RuvB-H) region spans residues 258 to 334 (NEGFDYMDRK…YQHFQLIKPE (77 aa)). Residues Arg294, Arg313, and Arg318 each coordinate DNA.

It belongs to the RuvB family. Homohexamer. Forms an RuvA(8)-RuvB(12)-Holliday junction (HJ) complex. HJ DNA is sandwiched between 2 RuvA tetramers; dsDNA enters through RuvA and exits via RuvB. An RuvB hexamer assembles on each DNA strand where it exits the tetramer. Each RuvB hexamer is contacted by two RuvA subunits (via domain III) on 2 adjacent RuvB subunits; this complex drives branch migration. In the full resolvosome a probable DNA-RuvA(4)-RuvB(12)-RuvC(2) complex forms which resolves the HJ.

Its subcellular location is the cytoplasm. The catalysed reaction is ATP + H2O = ADP + phosphate + H(+). Its function is as follows. The RuvA-RuvB-RuvC complex processes Holliday junction (HJ) DNA during genetic recombination and DNA repair, while the RuvA-RuvB complex plays an important role in the rescue of blocked DNA replication forks via replication fork reversal (RFR). RuvA specifically binds to HJ cruciform DNA, conferring on it an open structure. The RuvB hexamer acts as an ATP-dependent pump, pulling dsDNA into and through the RuvAB complex. RuvB forms 2 homohexamers on either side of HJ DNA bound by 1 or 2 RuvA tetramers; 4 subunits per hexamer contact DNA at a time. Coordinated motions by a converter formed by DNA-disengaged RuvB subunits stimulates ATP hydrolysis and nucleotide exchange. Immobilization of the converter enables RuvB to convert the ATP-contained energy into a lever motion, pulling 2 nucleotides of DNA out of the RuvA tetramer per ATP hydrolyzed, thus driving DNA branch migration. The RuvB motors rotate together with the DNA substrate, which together with the progressing nucleotide cycle form the mechanistic basis for DNA recombination by continuous HJ branch migration. Branch migration allows RuvC to scan DNA until it finds its consensus sequence, where it cleaves and resolves cruciform DNA. In Shewanella sp. (strain W3-18-1), this protein is Holliday junction branch migration complex subunit RuvB.